The sequence spans 121 residues: Large ribosomal subunit protein bL12 (121 aa).

The protein belongs to the bacterial ribosomal protein bL12 family. Homodimer. Part of the ribosomal stalk of the 50S ribosomal subunit. Forms a multimeric L10(L12)X complex, where L10 forms an elongated spine to which 2 to 4 L12 dimers bind in a sequential fashion. Binds GTP-bound translation factors.

Forms part of the ribosomal stalk which helps the ribosome interact with GTP-bound translation factors. Is thus essential for accurate translation. The chain is Large ribosomal subunit protein bL12 from Enterobacter sp. (strain 638).